The following is a 194-amino-acid chain: Large ribosomal subunit protein bL27c (194 aa).

A chloroplast-targeting transit peptide spans methionine 1 to serine 57. The interval serine 57–arginine 76 is disordered.

As to quaternary structure, component of the chloroplast large ribosomal subunit (LSU). Mature 70S chloroplast ribosomes of higher plants consist of a small (30S) and a large (50S) subunit. The 30S small subunit contains 1 molecule of ribosomal RNA (16S rRNA) and 24 different proteins. The 50S large subunit contains 3 rRNA molecules (23S, 5S and 4.5S rRNA) and 33 different proteins.

The protein resides in the plastid. Its subcellular location is the chloroplast. Component of the chloroplast ribosome (chloro-ribosome), a dedicated translation machinery responsible for the synthesis of chloroplast genome-encoded proteins, including proteins of the transcription and translation machinery and components of the photosynthetic apparatus. The sequence is that of Large ribosomal subunit protein bL27c (RPL27) from Spinacia oleracea (Spinach).